The primary structure comprises 373 residues: Dual-specificity RNA methyltransferase RlmN (373 aa).

Residue glutamate 94 is the Proton acceptor of the active site. Residues 100 to 339 form the Radical SAM core domain; the sequence is EEDRATLCVS…VIVRKTRGDD (240 aa). Cysteine 107 and cysteine 344 form a disulfide bridge. [4Fe-4S] cluster contacts are provided by cysteine 114, cysteine 118, and cysteine 121. S-adenosyl-L-methionine contacts are provided by residues 168-169, serine 200, 222-224, and asparagine 301; these read GE and SIH. The active-site S-methylcysteine intermediate is cysteine 344.

The protein belongs to the radical SAM superfamily. RlmN family. Requires [4Fe-4S] cluster as cofactor.

Its subcellular location is the cytoplasm. The catalysed reaction is adenosine(2503) in 23S rRNA + 2 reduced [2Fe-2S]-[ferredoxin] + 2 S-adenosyl-L-methionine = 2-methyladenosine(2503) in 23S rRNA + 5'-deoxyadenosine + L-methionine + 2 oxidized [2Fe-2S]-[ferredoxin] + S-adenosyl-L-homocysteine. The enzyme catalyses adenosine(37) in tRNA + 2 reduced [2Fe-2S]-[ferredoxin] + 2 S-adenosyl-L-methionine = 2-methyladenosine(37) in tRNA + 5'-deoxyadenosine + L-methionine + 2 oxidized [2Fe-2S]-[ferredoxin] + S-adenosyl-L-homocysteine. In terms of biological role, specifically methylates position 2 of adenine 2503 in 23S rRNA and position 2 of adenine 37 in tRNAs. m2A2503 modification seems to play a crucial role in the proofreading step occurring at the peptidyl transferase center and thus would serve to optimize ribosomal fidelity. This Shewanella frigidimarina (strain NCIMB 400) protein is Dual-specificity RNA methyltransferase RlmN.